The sequence spans 328 residues: Peroxisomal adenine nucleotide transporter 1 (328 aa).

6 consecutive transmembrane segments (helical) span residues 1 to 21 (MLTL…NIAV), 78 to 98 (TVTT…YTFI), 128 to 148 (LVLG…MAVV), 185 to 202 (LRTG…YASF), 226 to 246 (FILG…LIVA), and 277 to 297 (WKGV…LFAF). 3 Solcar repeats span residues 1 to 101 (MLTL…IRKS), 122 to 208 (PSTI…LKEV), and 220 to 304 (LSAV…LTKS).

This sequence belongs to the mitochondrial carrier (TC 2.A.29) family.

The protein localises to the peroxisome membrane. In terms of biological role, adenine nucleotide transporter involved in the uniport of ATP and adenine nucleotide hetero-exchange transport between the cytosol and the peroxisomal lumen. This transport is accompanied by a proton transport from the peroxisomal lumen to the cytosol. Transport of ATP into the peroxisome is required for beta-oxidation of medium-chain fatty acids. Required for growth on medium-chain fatty acids, pH gradient formation in peroxisomes and for normal peroxisome proliferation. This chain is Peroxisomal adenine nucleotide transporter 1 (ANT1), found in Saccharomyces cerevisiae (strain ATCC 204508 / S288c) (Baker's yeast).